The primary structure comprises 469 residues: MNPNQKIITIGSICMVIGIVSLMLQIGNIISIWVSHSIQTGNQHQAEPCNQSIITYENNTWVNQTYVNISNTNFLTEKAVASVTLAGNSSLCPISGWAVYSKDNGIRIGSKGDVFVIREPFISCSHLECRTFFLTQGALLNDKHSNGTVKDRSPYRTLMSCPVGEAPSPYNSRFESVAWSASACHDGTSWLTIGISGPDNGAVAVLKYNGIITDTIKSWRNNILRTQESECACVNGSCFTVMTDGPSNGQASYKIFKIEKGKVVKSVELNAPNYHYEECSCYPDAGEITCVCRDNWHGSNRPWVSFNQNLEYQIGYICSGVFGDNPRPNDGTGSCGPVSPNGAYGIKGFSFKYGNGVWIGRTKSTNSRSGFEMIWDPNGWTGTDSNFSVKQDIVAITDWSGYSGSFVQHPELTGLDCIRPCFWVELIRGRPKESTIWTSGSSISFCGVNSDTVGWSWPDGAELPFTIDK.

The Intravirion segment spans residues M1 to K6. A helical membrane pass occupies residues I7 to G27. The interval G11 to W33 is involved in apical transport and lipid raft association. Residues N28–K469 are Virion surface-facing. The tract at residues H36–S90 is hypervariable stalk region. N-linked (GlcNAc...) asparagine; by host glycans are attached at residues N50, N58, N63, N68, and N88. The head of neuraminidase stretch occupies residues L91–K469. Disulfide bonds link C92–C417, C124–C129, C184–C231, C233–C238, C279–C292, C281–C290, C318–C335, and C421–C446. R118 is a substrate binding site. A glycan (N-linked (GlcNAc...) asparagine; by host) is linked at N146. Residue D151 is the Proton donor/acceptor of the active site. Substrate is bound at residue R152. N235 carries an N-linked (GlcNAc...) asparagine; by host glycan. Position 277–278 (E277–E278) interacts with substrate. Residue R293 coordinates substrate. 3 residues coordinate Ca(2+): D294, G298, and D324. R368 serves as a coordination point for substrate. N-linked (GlcNAc...) asparagine; by host glycosylation occurs at N386. Y402 acts as the Nucleophile in catalysis.

This sequence belongs to the glycosyl hydrolase 34 family. In terms of assembly, homotetramer. The cofactor is Ca(2+). Post-translationally, N-glycosylated.

It localises to the virion membrane. The protein resides in the host apical cell membrane. The catalysed reaction is Hydrolysis of alpha-(2-&gt;3)-, alpha-(2-&gt;6)-, alpha-(2-&gt;8)- glycosidic linkages of terminal sialic acid residues in oligosaccharides, glycoproteins, glycolipids, colominic acid and synthetic substrates.. Its activity is regulated as follows. Inhibited by the neuraminidase inhibitors zanamivir (Relenza) and oseltamivir (Tamiflu). These drugs interfere with the release of progeny virus from infected cells and are effective against all influenza strains. Resistance to neuraminidase inhibitors is quite rare. In terms of biological role, catalyzes the removal of terminal sialic acid residues from viral and cellular glycoconjugates. Cleaves off the terminal sialic acids on the glycosylated HA during virus budding to facilitate virus release. Additionally helps virus spread through the circulation by further removing sialic acids from the cell surface. These cleavages prevent self-aggregation and ensure the efficient spread of the progeny virus from cell to cell. Otherwise, infection would be limited to one round of replication. Described as a receptor-destroying enzyme because it cleaves a terminal sialic acid from the cellular receptors. May facilitate viral invasion of the upper airways by cleaving the sialic acid moieties on the mucin of the airway epithelial cells. Likely to plays a role in the budding process through its association with lipid rafts during intracellular transport. May additionally display a raft-association independent effect on budding. Plays a role in the determination of host range restriction on replication and virulence. Sialidase activity in late endosome/lysosome traffic seems to enhance virus replication. The chain is Neuraminidase from Aves (Cat).